Consider the following 203-residue polypeptide: Probable flagellin 1 (203 aa).

Residues 1–11 (MGMRFLKNEKG) constitute a propeptide that is removed on maturation.

The protein belongs to the archaeal flagellin family.

The protein resides in the archaeal flagellum. Its function is as follows. Flagellin is the subunit protein which polymerizes to form the filaments of archaeal flagella. In Archaeoglobus fulgidus (strain ATCC 49558 / DSM 4304 / JCM 9628 / NBRC 100126 / VC-16), this protein is Probable flagellin 1 (flaB1).